The following is a 326-amino-acid chain: MATH domain and coiled-coil domain-containing protein At3g58370 (326 aa).

The 127-residue stretch at 7–133 (DNKFTWVIKN…NGEVKIVVEI (127 aa)) folds into the MATH domain. Positions 259–312 (LRLDWLEKKLAEVKAKKKKVETGKARLQRAEEELQKLNQKCLELKAFLEKENAD) form a coiled coil.

This Arabidopsis thaliana (Mouse-ear cress) protein is MATH domain and coiled-coil domain-containing protein At3g58370.